The following is a 758-amino-acid chain: 5-methyltetrahydropteroyltriglutamate--homocysteine methyltransferase (758 aa).

Residues 17–20 (RELK) and Lys117 contribute to the 5-methyltetrahydropteroyltri-L-glutamate site. Residues 434–436 (IGS) and Glu487 contribute to the L-homocysteine site. L-methionine contacts are provided by residues 434–436 (IGS) and Glu487. 5-methyltetrahydropteroyltri-L-glutamate is bound by residues 518–519 (RC) and Trp564. Residue Asp602 coordinates L-homocysteine. Residue Asp602 participates in L-methionine binding. Glu608 contacts 5-methyltetrahydropteroyltri-L-glutamate. Positions 644, 646, and 668 each coordinate Zn(2+). The active-site Proton donor is His697. Cys729 lines the Zn(2+) pocket.

It belongs to the vitamin-B12 independent methionine synthase family. The cofactor is Zn(2+).

It carries out the reaction 5-methyltetrahydropteroyltri-L-glutamate + L-homocysteine = tetrahydropteroyltri-L-glutamate + L-methionine. It participates in amino-acid biosynthesis; L-methionine biosynthesis via de novo pathway; L-methionine from L-homocysteine (MetE route): step 1/1. Its function is as follows. Catalyzes the transfer of a methyl group from 5-methyltetrahydrofolate to homocysteine resulting in methionine formation. The protein is 5-methyltetrahydropteroyltriglutamate--homocysteine methyltransferase of Photorhabdus laumondii subsp. laumondii (strain DSM 15139 / CIP 105565 / TT01) (Photorhabdus luminescens subsp. laumondii).